The chain runs to 467 residues: Interleukin-6 receptor subunit alpha (467 aa).

A signal peptide spans 1–19 (MLAVGCALLTALLAAPGMA). An Ig-like C2-type domain is found at 20 to 112 (LAPRGCSKLE…AGSVRLLVDA (93 aa)). Topologically, residues 20–365 (LAPRGCSKLE…VQDSASVPLP (346 aa)) are extracellular. Cystine bridges form between cysteine 25–cysteine 193, cysteine 47–cysteine 96, cysteine 121–cysteine 132, and cysteine 165–cysteine 176. Residues asparagine 55 and asparagine 93 are each glycosylated (N-linked (GlcNAc...) asparagine). Fibronectin type-III domains are found at residues 113 to 217 (PPEE…LQPD) and 218 to 316 (PPVN…IPWT). Asparagine 221 and asparagine 245 each carry an N-linked (GlcNAc...) asparagine glycan. Positions 303-307 (WSEWS) match the WSXWS motif motif. Residues 315 to 357 (WTESRSSPAETELPLSTQAPTTNEDDEDISSKESANATSLPVQ) are disordered. 2 stretches are compositionally biased toward polar residues: residues 317–336 (ESRS…APTT) and 346–357 (KESANATSLPVQ). The N-linked (GlcNAc...) asparagine glycan is linked to asparagine 350. O-linked (GlcNAc) threonine glycosylation occurs at threonine 352. A helical transmembrane segment spans residues 366-386 (TFLVAGGSLAFGTLLCIGIIL). The Cytoplasmic segment spans residues 387 to 467 (RFKKTGQLQA…VSNRDYFFPR (81 aa)). Residues 428-467 (ISPPVSPNSLGDNTSRNSRPEARGPQSPYDVSNRDYFFPR) form a disordered region.

This sequence belongs to the type I cytokine receptor family. Type 3 subfamily. Component of a hexamer of two molecules each of IL6, IL6R and IL6ST; first binds to IL6 to associate with the signaling subunit IL6ST. Interacts (via N-terminal ectodomain) with SORL1; this interaction may affect IL6-binding to IL6R, hence decrease IL6 'classic-signaling'. In terms of assembly, also interacts with SORL1; this interaction leads to soluble IL6R internalization. May form a trimeric complex with the soluble SORL1 ectodomain and circulating IL6 receptor; this interaction might stabilize circulating IL6, hence promote IL6 'trans-signaling'. Post-translationally, a short soluble form is also released from the membrane by proteolysis. The sIL6R is formed by limited proteolysis of membrane-bound receptors, a process referred to as ectodomain shedding. mIL6R is cleaved by the proteases ADAM10 and ADAM17. In terms of processing, glycosylated. Glycosylation is dispensable for transport, signaling, and cell-surface turnover. Glycosylation at Asn-55 is a protease-regulatory exosite. Glycosylation is required for ADAM17-mediated proteolysis. As to expression, expressed in liver.

Its subcellular location is the cell membrane. The protein resides in the secreted. Its activity is regulated as follows. Classic and trans-signaling are both inhibited by tocilizumab, a humanized monoclonal antibody that blocks interleukin IL6R signaling. In terms of biological role, part of the receptor for interleukin 6. Binds to IL6 with low affinity, but does not transduce a signal. Signal activation necessitate an association with IL6ST. Activation leads to the regulation of the immune response, acute-phase reactions and hematopoiesis. The interaction with membrane-bound IL6R and IL6ST stimulates 'classic signaling', the restricted expression of the IL6R limits classic IL6 signaling to only a few tissues such as the liver and some cells of the immune system. Whereas the binding of IL6 and soluble IL6R to IL6ST stimulates 'trans-signaling'. Alternatively, 'cluster signaling' occurs when membrane-bound IL6:IL6R complexes on transmitter cells activate IL6ST receptors on neighboring receiver cells. Signaling via the membrane-bound IL6R is mostly regenerative and anti-inflammatory. Drives naive CD4(+) T cells to the Th17 lineage, through 'cluster signaling' by dendritic cells. Functionally, soluble form of IL6 receptor (sIL6R) that acts as an agonist of IL6 activity. The IL6:sIL6R complex (hyper-IL6) binds to IL6ST/gp130 on cell surfaces and induces signaling also on cells that do not express membrane-bound IL6R in a process called IL6 'trans-signaling'. sIL6R is causative for the pro-inflammatory properties of IL6 and an important player in the development of chronic inflammatory diseases. In complex with IL6, is required for induction of VEGF production. Plays a protective role during liver injury, being required for maintenance of tissue regeneration. 'Trans-signaling' in central nervous system regulates energy and glucose homeostasis. The chain is Interleukin-6 receptor subunit alpha (IL6R) from Sus scrofa (Pig).